The primary structure comprises 103 residues: Large ribosomal subunit protein bL21 (103 aa).

It belongs to the bacterial ribosomal protein bL21 family. Part of the 50S ribosomal subunit. Contacts protein L20.

This protein binds to 23S rRNA in the presence of protein L20. The protein is Large ribosomal subunit protein bL21 of Colwellia psychrerythraea (strain 34H / ATCC BAA-681) (Vibrio psychroerythus).